We begin with the raw amino-acid sequence, 1586 residues long: Zinc finger protein GLI2 (1586 aa).

Residues 1–10 (METSASATAS) are compositionally biased toward polar residues. The interval 1 to 22 (METSASATASEKQEAKSGILEA) is disordered. A Glycyl lysine isopeptide (Lys-Gly) (interchain with G-Cter in SUMO2) cross-link involves residue valine 50. Serine 149, serine 234, serine 236, and serine 242 each carry phosphoserine. The segment covering 342–367 (SSSSNCLSDTNQNKQSSESAVSSTVN) has biased composition (polar residues). The disordered stretch occupies residues 342–389 (SSSSNCLSDTNQNKQSSESAVSSTVNPVAIHKRSKVKTEPEGLRPASP). Residue serine 388 is modified to Phosphoserine; by DYRK2. The C2H2-type 1 zinc finger occupies 437–464 (TNCHWEDCTKEYDTQEQLVHHINNEHIH). Residues 475-497 (QACTREQKPFKAQYMLVVHMRRH) form a C2H2-type 2; degenerate zinc finger. 3 C2H2-type zinc fingers span residues 503–527 (HKCT…LRSH), 533–558 (YVCE…NRTH), and 564–589 (YICK…KTVH). Disordered stretches follow at residues 577–636 (DPSS…TSQA) and 650–716 (SSGL…SAGG). Positions 589–605 (HGPDAHVTKKQRNDVHL) are enriched in basic and acidic residues. The segment covering 654-674 (CQSSPGAQSSCSSEPSPLGSA) has biased composition (low complexity). Threonine 725 is subject to Phosphothreonine. 5 disordered regions span residues 742–879 (DSCS…SGLL), 925–1030 (RTLP…RPPS), 1182–1215 (QYPG…PSQG), 1421–1441 (MGNM…GAPD), and 1469–1498 (MRSQ…QVSS). At lysine 757 the chain carries N6-acetyllysine; by EP300. The span at 791 to 802 (LSASEVTMLSQL) shows a compositional bias: polar residues. Composition is skewed to low complexity over residues 809-824 (STST…RRSS) and 947-961 (GHGH…PHEA). Basic and acidic residues predominate over residues 968 to 977 (RASDPVRRPD). Serine 1011 carries the post-translational modification Phosphoserine; by DYRK2. Over residues 1469–1485 (MRSQPPQPQACQDSIQP) the composition is skewed to polar residues.

Belongs to the GLI C2H2-type zinc-finger protein family. In terms of assembly, interaction with ZIC1 and ZIC2. Interacts with STK36. Interacts with SUFU; this inhibits transcriptional activation mediated by GLI2. Interacts (via C-terminal internal region) with FOXC1 (via N-terminus); this interaction is direct and increases GLI2 DNA-binding and transcriptional activity through a smoothened (SMO)-independent Hedgehog (Hh) signaling pathway. Phosphorylated in vitro by ULK3. Phosphorylated by DYRK2; this inhibits GLI2 transcription factor activity and promotes proteasomal degradation of GLI2. Post-translationally, acetylation at Lys-757 inhibits Hh target gene expression, probably by impeding entry into chromatin thus preventing promoter occupancy. As to expression, expressed in breast cancers (at protein level). Isoform 1 and isoform 4 are expressed in HTLV-1-infected T-cell lines (at protein level). Isoform 1 and isoform 2 are strongly expressed in HTLV-1-infected T-cell lines. Isoform 3 and isoform 4 are weakly expressed in HTLV-1-infected T-cell lines.

It localises to the nucleus. It is found in the cytoplasm. The protein resides in the cell projection. Its subcellular location is the cilium. In terms of biological role, functions as a transcription regulator in the hedgehog (Hh) pathway. Functions as a transcriptional activator. May also function as transcriptional repressor. Requires STK36 for full transcriptional activator activity. Required for normal embryonic development. Functionally, involved in the smoothened (SHH) signaling pathway. Acts as a transcriptional activator in T-cell leukemia virus type 1 (HTLV-1)-infected cells in a Tax-dependent manner. Binds to the DNA sequence 5'-GAACCACCCA-3' which is part of the Tax-responsive element (TRE-2S) regulatory element that augments the Tax-dependent enhancer of HTLV-1. Its function is as follows. (Microbial infection) Acts as a transcriptional activators in T-cell leukemia virus type 1 (HTLV-1)-infected cells in a Tax-dependent manner. Binds to the DNA sequence 5'-GAACCACCCA-3' which is part of the Tax-responsive element (TRE-2S) regulatory element that augments the Tax-dependent enhancer of HTLV-1. In terms of biological role, acts as a transcriptional repressor. The chain is Zinc finger protein GLI2 from Homo sapiens (Human).